The chain runs to 156 residues: Small ribosomal subunit protein uS7 (156 aa).

This sequence belongs to the universal ribosomal protein uS7 family. In terms of assembly, part of the 30S ribosomal subunit. Contacts proteins S9 and S11.

Its function is as follows. One of the primary rRNA binding proteins, it binds directly to 16S rRNA where it nucleates assembly of the head domain of the 30S subunit. Is located at the subunit interface close to the decoding center, probably blocks exit of the E-site tRNA. The polypeptide is Small ribosomal subunit protein uS7 (Trichlorobacter lovleyi (strain ATCC BAA-1151 / DSM 17278 / SZ) (Geobacter lovleyi)).